The following is a 686-amino-acid chain: U-box domain-containing protein 19 (686 aa).

A U-box domain is found at 277 to 351 (LNVDDLRCPI…QSYSKQNGVV (75 aa)). ARM repeat units follow at residues 406 to 445 (TFYR…NLSK), 448 to 489 (AGKT…YLSS), 491 to 533 (GDYS…SLLM), 536 to 577 (PDNH…KMAE), and 579 to 620 (PDGM…NLCH).

It catalyses the reaction S-ubiquitinyl-[E2 ubiquitin-conjugating enzyme]-L-cysteine + [acceptor protein]-L-lysine = [E2 ubiquitin-conjugating enzyme]-L-cysteine + N(6)-ubiquitinyl-[acceptor protein]-L-lysine.. Its pathway is protein modification; protein ubiquitination. Functionally, functions as an E3 ubiquitin ligase. In Arabidopsis thaliana (Mouse-ear cress), this protein is U-box domain-containing protein 19 (PUB19).